A 741-amino-acid chain; its full sequence is Isocitrate dehydrogenase [NADP] (741 aa).

NADP(+) is bound by residues asparagine 85 and serine 87. D-threo-isocitrate is bound by residues serine 132, asparagine 135, arginine 139, arginine 145, and lysine 255. Residue asparagine 135 coordinates NADP(+). Residue aspartate 350 participates in Mn(2+) binding. Tyrosine 420 and arginine 547 together coordinate D-threo-isocitrate. Aspartate 548 is a binding site for Mn(2+). 5 residues coordinate NADP(+): serine 585, histidine 589, arginine 600, aspartate 602, and arginine 649.

The protein belongs to the monomeric-type IDH family. As to quaternary structure, monomer. Mg(2+) is required as a cofactor. Requires Mn(2+) as cofactor.

The protein resides in the cytoplasm. It carries out the reaction D-threo-isocitrate + NADP(+) = 2-oxoglutarate + CO2 + NADPH. With respect to regulation, activity is inhibited in the presence of Ca(2+). Its function is as follows. Catalyzes the oxidative decarboxylation of isocitrate to 2-oxoglutarate and carbon dioxide with the concomitant reduction of NADP(+). The sequence is that of Isocitrate dehydrogenase [NADP] from Azotobacter vinelandii.